We begin with the raw amino-acid sequence, 429 residues long: Choline kinase A2 (429 aa).

Residues 82-88 (KGGMSNM), arginine 111, 152-158 (EYIPSRP), and glutamine 257 each bind ATP. 84 to 86 (GMS) contacts substrate. Ca(2+) is bound at residue glutamate 258. Aspartate 301 contributes to the ATP binding site. Ca(2+)-binding residues include glutamate 320 and isoleucine 323.

This sequence belongs to the choline/ethanolamine kinase family. In terms of assembly, homodimer. A small proportion exists as higher oligomers. The cofactor is Mg(2+).

It carries out the reaction choline + ATP = phosphocholine + ADP + H(+). The catalysed reaction is ethanolamine + ATP = phosphoethanolamine + ADP + H(+). It functions in the pathway phospholipid metabolism; phosphatidylcholine biosynthesis; phosphocholine from choline: step 1/1. It participates in phospholipid metabolism; phosphatidylethanolamine biosynthesis; phosphatidylethanolamine from ethanolamine: step 1/3. Inhibited by Ca(2+). Mild inhibition by high levels of Mg(2+)(&gt;10 mM). In terms of biological role, catalyzes the first step in phosphatidylcholine biosynthesis. May contribute to phosphatidylethanolamine biosynthesis. Phosphorylates choline and ethanolamine but the activity is much higher with choline. The polypeptide is Choline kinase A2 (Caenorhabditis elegans).